Consider the following 294-residue polypeptide: 4-hydroxy-tetrahydrodipicolinate synthase (294 aa).

Threonine 47 is a pyruvate binding site. Tyrosine 135 serves as the catalytic Proton donor/acceptor. Lysine 163 acts as the Schiff-base intermediate with substrate in catalysis. Pyruvate is bound at residue isoleucine 206.

It belongs to the DapA family. In terms of assembly, homodimer.

The protein localises to the cytoplasm. The enzyme catalyses L-aspartate 4-semialdehyde + pyruvate = (2S,4S)-4-hydroxy-2,3,4,5-tetrahydrodipicolinate + H2O + H(+). Its pathway is amino-acid biosynthesis; L-lysine biosynthesis via DAP pathway; (S)-tetrahydrodipicolinate from L-aspartate: step 3/4. Its function is as follows. Catalyzes the condensation of (S)-aspartate-beta-semialdehyde [(S)-ASA] and pyruvate to 4-hydroxy-tetrahydrodipicolinate (HTPA). This is 4-hydroxy-tetrahydrodipicolinate synthase from Staphylococcus haemolyticus (strain JCSC1435).